A 416-amino-acid chain; its full sequence is Coenzyme F420H(2) oxidase (416 aa).

His87, Glu89, Asp91, His92, His155, Asp174, and His239 together coordinate Fe cation. A Flavodoxin-like domain is found at 266–407 (AVIVYDTMHY…NCYNMGKELA (142 aa)). FMN contacts are provided by residues 272-277 (TMHYST), 324-327 (TIYD), and 359-364 (SMGGEG).

In the N-terminal section; belongs to the zinc metallo-hydrolase group 3 family. The cofactor is FMN. Fe cation is required as a cofactor.

The enzyme catalyses 2 reduced coenzyme F420-(gamma-L-Glu)(n) + O2 = 2 oxidized coenzyme F420-(gamma-L-Glu)(n) + 2 H2O + 2 H(+). Catalyzes the oxidation of F420H(2) with O(2). May be involved in O(2) detoxification, reducing the intracellular O(2) concentration to a level allowing growth at the expense of methane formation. This is Coenzyme F420H(2) oxidase (fprA) from Methanocaldococcus jannaschii (strain ATCC 43067 / DSM 2661 / JAL-1 / JCM 10045 / NBRC 100440) (Methanococcus jannaschii).